The primary structure comprises 273 residues: Large ribosomal subunit protein uL2c (273 aa).

The segment covering 1–31 (MAIHLSKTSSPSTRNGAVNSQVKSNSRNRLI) has biased composition (polar residues). 2 disordered regions span residues 1–53 (MAIH…GHRG) and 222–273 (MNPV…RRSK).

This sequence belongs to the universal ribosomal protein uL2 family. As to quaternary structure, part of the 50S ribosomal subunit.

The protein localises to the plastid. It localises to the chloroplast. The chain is Large ribosomal subunit protein uL2c (rpl2) from Pisum sativum (Garden pea).